The sequence spans 443 residues: Tol-Pal system protein TolB (443 aa).

Residues 1-33 (MKIGIINTKIRTVFSAFACMIAASLVCTMPARA) form the signal peptide.

The protein belongs to the TolB family. As to quaternary structure, the Tol-Pal system is composed of five core proteins: the inner membrane proteins TolA, TolQ and TolR, the periplasmic protein TolB and the outer membrane protein Pal. They form a network linking the inner and outer membranes and the peptidoglycan layer.

The protein resides in the periplasm. Its function is as follows. Part of the Tol-Pal system, which plays a role in outer membrane invagination during cell division and is important for maintaining outer membrane integrity. The polypeptide is Tol-Pal system protein TolB (Brucella suis (strain ATCC 23445 / NCTC 10510)).